Here is a 196-residue protein sequence, read N- to C-terminus: Large ribosomal subunit protein mL66 (196 aa).

The N-terminal 34 residues, 1–34 (MAALKALVSGCGRLLRGLLAGPAATSWSRLPARG), are a transit peptide targeting the mitochondrion.

This sequence belongs to the bacterial ribosomal protein bS18 family. Mitochondrion-specific ribosomal protein mL66 subfamily. In terms of assembly, component of the mitochondrial large ribosomal subunit (mt-LSU). Mature mammalian 55S mitochondrial ribosomes consist of a small (28S) and a large (39S) subunit. The 28S small subunit contains a 12S ribosomal RNA (12S mt-rRNA) and 30 different proteins. The 39S large subunit contains a 16S rRNA (16S mt-rRNA), a copy of mitochondrial valine transfer RNA (mt-tRNA(Val)), which plays an integral structural role, and 52 different proteins. mL66 forms a zinc-binding site with uL10m.

It is found in the mitochondrion. The polypeptide is Large ribosomal subunit protein mL66 (MRPS18A) (Homo sapiens (Human)).